The chain runs to 838 residues: Protein translocase subunit SecA (838 aa).

Residues Gln-85, 103–107 (GEGKT), and Asp-493 each bind ATP. Zn(2+)-binding residues include Cys-823, Cys-825, Cys-834, and His-835.

Belongs to the SecA family. As to quaternary structure, monomer and homodimer. Part of the essential Sec protein translocation apparatus which comprises SecA, SecYEG and auxiliary proteins SecDF. Other proteins may also be involved. Requires Zn(2+) as cofactor.

Its subcellular location is the cell membrane. The protein localises to the cytoplasm. It carries out the reaction ATP + H2O + cellular proteinSide 1 = ADP + phosphate + cellular proteinSide 2.. In terms of biological role, part of the Sec protein translocase complex. Interacts with the SecYEG preprotein conducting channel. Has a central role in coupling the hydrolysis of ATP to the transfer of proteins into and across the cell membrane, serving as an ATP-driven molecular motor driving the stepwise translocation of polypeptide chains across the membrane. The polypeptide is Protein translocase subunit SecA (Streptococcus gordonii (strain Challis / ATCC 35105 / BCRC 15272 / CH1 / DL1 / V288)).